The sequence spans 1572 residues: Multiple epidermal growth factor-like domains protein 6 (1572 aa).

The first 26 residues, 1 to 26 (MPVGVEARASWRVVALTLLLLPAVPA), serve as a signal peptide directing secretion. An EMI domain is found at 40–121 (MPHVCAEQKL…QKPGQEGCLS (82 aa)). 36 disulfides stabilise this stretch: Cys-44-Cys-107, Cys-73-Cys-79, Cys-106-Cys-119, Cys-126-Cys-137, Cys-133-Cys-146, Cys-148-Cys-161, Cys-167-Cys-178, Cys-174-Cys-187, Cys-189-Cys-202, Cys-291-Cys-302, Cys-298-Cys-311, Cys-313-Cys-326, Cys-418-Cys-429, Cys-425-Cys-438, Cys-440-Cys-453, Cys-522-Cys-535, Cys-529-Cys-542, Cys-544-Cys-553, Cys-566-Cys-578, Cys-572-Cys-585, Cys-587-Cys-596, Cys-609-Cys-621, Cys-615-Cys-628, Cys-630-Cys-639, Cys-788-Cys-797, Cys-791-Cys-804, Cys-806-Cys-815, Cys-832-Cys-840, Cys-834-Cys-847, Cys-849-Cys-858, Cys-871-Cys-884, Cys-875-Cys-891, Cys-893-Cys-902, Cys-915-Cys-927, Cys-921-Cys-934, and Cys-936-Cys-945. In terms of domain architecture, EGF-like 1; calcium-binding spans 122–162 (DVDECANANGGCEGPCCNTVGGFYCRCPPGYQLQGDGKTCQ). The EGF-like 2; calcium-binding domain maps to 163–203 (DVDECRSHNGGCQHRCVNTPGSYLCECKPGFRLHTDGRTCL). Residues 287 to 327 (DVDECALGLAQCAHGCLNTQGSFKCVCHAGYELGADGRQCY) form the EGF-like 3; calcium-binding domain. Residues 414–454 (DVDECASGHSGCEHHCSNLAGSFQCFCEAGYRLDEDRRGCT) enclose the EGF-like 4; calcium-binding domain. 17 consecutive EGF-like domains span residues 518 to 554 (FGHD…IICN), 562 to 597 (FGKN…AHCE), 605 to 640 (YGKH…RFCH), 785 to 816 (QEIC…SRCQ), 829 to 859 (QMRC…LSCQ), 867 to 903 (WGPD…PQCE), 911 to 946 (FGPG…SFCE), 997 to 1032 (FGLN…PTCL), 1040 to 1075 (YGKN…LACE), 1083 to 1118 (HGAG…DKCQ), 1131 to 1161 (EEHC…SHCE), 1169 to 1204 (FGEA…PGCE), 1256 to 1291 (YGPG…ADCS), 1299 to 1334 (FGPS…GHCE), 1342 to 1377 (FGKG…PHCE), 1390 to 1420 (LLEC…QACE), and 1428 to 1463 (HGSG…QFCE). Asn-1000 carries N-linked (GlcNAc...) asparagine glycosylation. Intrachain disulfides connect Cys-1001/Cys-1013, Cys-1007/Cys-1020, Cys-1022/Cys-1031, Cys-1044/Cys-1056, Cys-1050/Cys-1063, Cys-1065/Cys-1074, Cys-1087/Cys-1099, Cys-1093/Cys-1106, Cys-1108/Cys-1117, Cys-1134/Cys-1142, Cys-1136/Cys-1149, Cys-1151/Cys-1160, Cys-1173/Cys-1185, Cys-1177/Cys-1192, Cys-1194/Cys-1203, Cys-1260/Cys-1272, Cys-1266/Cys-1279, Cys-1281/Cys-1290, Cys-1303/Cys-1315, Cys-1309/Cys-1322, Cys-1324/Cys-1333, Cys-1346/Cys-1358, Cys-1352/Cys-1365, Cys-1367/Cys-1376, Cys-1393/Cys-1401, Cys-1395/Cys-1408, Cys-1410/Cys-1419, Cys-1432/Cys-1444, Cys-1438/Cys-1451, and Cys-1453/Cys-1462.

It is found in the secreted. In Mus musculus (Mouse), this protein is Multiple epidermal growth factor-like domains protein 6 (Megf6).